Reading from the N-terminus, the 633-residue chain is Leucine-rich repeat and IQ domain-containing protein 3 (633 aa).

LRR repeat units lie at residues 51-72 (SLRV…QSCK), 73-94 (KLIK…NFWS), and 98-119 (NLKL…CVLS). Residues 132–179 (CPVSLKKGYRHVLVNSIWPLKALDHHVISDEEIIQNWRLPERFKTFSP) enclose the LRRCT domain. The IQ domain maps to 215–244 (HNSPVLIIQRWIRGFIVRKHLSPYFKHKKH). The tract at residues 324–343 (SKQPRHHIHKGQKAMKAESE) is disordered. Residues 325–336 (KQPRHHIHKGQK) show a composition bias toward basic residues. Residues 556–617 (IEKWEEQKYK…AKVEYIKTFY (62 aa)) are a coiled coil.

This is Leucine-rich repeat and IQ domain-containing protein 3 (Lrriq3) from Mus musculus (Mouse).